A 1562-amino-acid polypeptide reads, in one-letter code: MVKKKKFKTKNIQNPPFSSQNSSHLFFSLKKKEEKESTPEVFVIDDHFNTFKTPKALKFRTPIFFNVSFDKNTLKTVIAWFLDQYGGKATVDLVETLKQVGFHQATRAGVSLGLEDLQIPPQKASFLSAASVSGVEAAQALETGNLTSVEKSQRLIDTWNKTSESLRQAAVHNFRATNPVNPVYMMAFSGARGNISQVRQLVAMRGLMADPQGAILEFPIQSNFREGLTITEYLLSCYGARKGLVDTALRTASAGYLTRRLVDAVQHVVIYTKNCKTEKGITFKGLHIEQNLLGRVLLKDVILNTTTVIPKDTLVSSSLAKKLAAINQKIFVRSPLTCQTEKTVCQLCYGLDLAQGKLVCFGEAVGIIAAQSIGEPGTQLTMRTFHTGGVGVFSEQAMKSFPAPFDGKIEFQEALPGRFVRTPYGKIVYLLKHTGTNPKQVLLRVVSSSLTMRPLVYEILHQDVPAGSLLWVKQGEDVRTGQLLVQGSRLQKSKQKMPESTHIVRTPFSGELFFEHMPIVSLEKIITRGPRTNPKEEFSPIKVFLKDLGRFWVFSSFIQKQTFSFLDQKKGKANSFFFKGDLVSAETPLSQYNLQIPVRGHLKKLGSSVVLAQTVFKFCFSKIYYFSKFYFLVENQNLIASTTTLNFTSLTWYPFFNQFETSGYYVDLSFSSDSEVLKTTELTKVKSETYDFTKNGGFFTSHQSFVGSTTRVFLLKTFEFFSAASKQTQKTALERLPFVDSMSFSLEKIQLKKQNQKRKENPLFSLEVGKVKRNTQQRLPQFGFMVTCEENSLSRKGIFQIKKAQEKNWSHKKTFQLSFLLNPKKRKKPLKKHFMCSSLFLEKAVKRAQTTFGIQTETKLIEKKCSWFSVSKNFTDFSSQLTGIVLEPGKHMESFSFQHSYVSVNLISRENVFLVKSKTKRSQFSYVLKDLLSSSRFCHKVFEKNFSEQKMESVEKISQIFSSQTESFFSRNNQLLSFFSQKKRIKNKLFFHSQLNFPSKMPRRSDVLNSSKLLFFTREFLSDFSFYKRKELIQKRERKPHTLQNIKVKNKKFLQVIQPCFQLKKKRCLSNLFFLQKLSYQIFPERKFFYETWLNQSSFDFSLPSPFSTKQFKTTGFFSKNELQKASFDFQPSFLSQKISSSSQLTLRGSWVSMTNSFKIHFEVKTPKFFGKIEEFQQKKFFDKKLKFGIQSPSKSLSKALSFGIPIPEFSLAVSRKIIFEKAHTYIFQSFQCRQVLPKVPITQVFLKSKTVGEFQRIQLKNQKGSSSFLRAEDTVTFLLPSLVPKKQSFLKKEEKVLVSCGQRIRWGQEIFPGFASSLSGRILDITATQITVRKALPFLGSRRGLVHVAQNDLLQKNHILMTLRSKQLQTEDIVQGIPKIEQLFEARETKDGEIIRYNMHFRLNSFFSLAKRVKPFLEAFDLSLLYIQRFLVKTLLEAYSNQGVNIAEKHVEVVVRQMTARVRITFGKDTSLLPGEFIQLRLLEEINRSLVEAKKEPALYEPVILGLTKSVLQSESFLLAASFQQVSKVLVRSALATKTDFLRGLMKPLYVASLSQREQEL.

A disordered region spans residues 1–22 (MVKKKKFKTKNIQNPPFSSQNS). Polar residues predominate over residues 11–22 (NIQNPPFSSQNS). Zn(2+) contacts are provided by Cys-275, Cys-338, Cys-345, and Cys-348.

The protein belongs to the RNA polymerase beta' chain family. RpoC2 subfamily. As to quaternary structure, in plastids the minimal PEP RNA polymerase catalytic core is composed of four subunits: alpha, beta, beta', and beta''. When a (nuclear-encoded) sigma factor is associated with the core the holoenzyme is formed, which can initiate transcription. Requires Zn(2+) as cofactor.

Its subcellular location is the plastid. The protein localises to the chloroplast. The catalysed reaction is RNA(n) + a ribonucleoside 5'-triphosphate = RNA(n+1) + diphosphate. In terms of biological role, DNA-dependent RNA polymerase catalyzes the transcription of DNA into RNA using the four ribonucleoside triphosphates as substrates. The chain is DNA-directed RNA polymerase subunit beta'' from Chlorella vulgaris (Green alga).